Consider the following 311-residue polypeptide: Olfactory receptor 8G1 (311 aa).

Residues 1–25 lie on the Extracellular side of the membrane; that stretch reads MSGENNSSVTEFILAGLSEQPELQL. N-linked (GlcNAc...) asparagine glycans are attached at residues Asn-5 and Asn-6. Residues 26-46 form a helical membrane-spanning segment; it reads PLFLLFLGIYVVTVVGNLGMT. Over 47–54 the chain is Cytoplasmic; that stretch reads TLIWLSSH. The chain crosses the membrane as a helical span at residues 55 to 75; it reads LHTPMYYFLSSLSFIDFCHST. Residues 76–99 are Extracellular-facing; that stretch reads VITPKMLVNFVTEKNIISYPECMT. A disulfide bridge links Cys-97 with Cys-189. Residues 100-120 form a helical membrane-spanning segment; the sequence is QLYFFLVFAIAECHMLAAMAY. The Cytoplasmic portion of the chain corresponds to 121–139; that stretch reads DRYMAICSPLLYSVIISNK. A helical transmembrane segment spans residues 140-160; that stretch reads ACFSLILGVYIIGLVCASVHT. Topologically, residues 161–197 are extracellular; the sequence is GCMFRVQFCKFDLINHYFCDLLPLLKLSCSSIYVNKL. The chain crosses the membrane as a helical span at residues 198–217; sequence LILCVGAFNILVPSLTILCS. Over 218–237 the chain is Cytoplasmic; sequence YIFIIASILHIRSTEGRSKA. The helical transmembrane segment at 238–258 threads the bilayer; that stretch reads FSTCSSHMLAVVIFFGSAAFM. At 259 to 271 the chain is on the extracellular side; the sequence is YLQPSSISSMDQG. Residues 272–292 traverse the membrane as a helical segment; sequence KVSSVFYTIIVPMLNPLIYSL. Topologically, residues 293 to 311 are cytoplasmic; the sequence is RNKDVHVSLKKMLQRRTLL.

This sequence belongs to the G-protein coupled receptor 1 family.

It is found in the cell membrane. Functionally, odorant receptor. In Homo sapiens (Human), this protein is Olfactory receptor 8G1 (OR8G1).